The sequence spans 603 residues: Elongation factor 4 (603 aa).

The region spanning 6 to 188 is the tr-type G domain; that stretch reads KYVRNFSIIA…DIVKNVPAPI (183 aa). GTP is bound by residues 18–23 and 135–138; these read DHGKST and NKID.

The protein belongs to the TRAFAC class translation factor GTPase superfamily. Classic translation factor GTPase family. LepA subfamily.

The protein resides in the cell membrane. The enzyme catalyses GTP + H2O = GDP + phosphate + H(+). Functionally, required for accurate and efficient protein synthesis under certain stress conditions. May act as a fidelity factor of the translation reaction, by catalyzing a one-codon backward translocation of tRNAs on improperly translocated ribosomes. Back-translocation proceeds from a post-translocation (POST) complex to a pre-translocation (PRE) complex, thus giving elongation factor G a second chance to translocate the tRNAs correctly. Binds to ribosomes in a GTP-dependent manner. The sequence is that of Elongation factor 4 from Finegoldia magna (strain ATCC 29328 / DSM 20472 / WAL 2508) (Peptostreptococcus magnus).